We begin with the raw amino-acid sequence, 819 residues long: Molybdenum cofactor sulfurase (819 aa).

N6-(pyridoxal phosphate)lysine is present on K271. C430 is an active-site residue. Residues 650 to 817 form the MOSC domain; it reads CKLLRYSSST…IGVGEEVNPD (168 aa).

It belongs to the class-V pyridoxal-phosphate-dependent aminotransferase family. MOCOS subfamily. Pyridoxal 5'-phosphate serves as cofactor. Ubiquitously expressed.

It catalyses the reaction Mo-molybdopterin + L-cysteine + AH2 = thio-Mo-molybdopterin + L-alanine + A + H2O. Its pathway is cofactor biosynthesis; molybdopterin biosynthesis. Its function is as follows. Sulfurates the molybdenum cofactor. Sulfation of molybdenum is essential for xanthine dehydrogenase (XDH) and aldehyde oxidase (ADO) enzymes in which molybdenum cofactor is liganded by 1 oxygen and 1 sulfur atom in active form. Modulates cold stress- and osmotic stress-responsive gene expression by acting as key regulator of abscisic acid (ABA) biosynthesis. The chain is Molybdenum cofactor sulfurase (ABA3) from Arabidopsis thaliana (Mouse-ear cress).